A 448-amino-acid polypeptide reads, in one-letter code: tRNA modification GTPase MnmE (448 aa).

(6S)-5-formyl-5,6,7,8-tetrahydrofolate is bound by residues Arg-24, Glu-81, and Lys-120. In terms of domain architecture, TrmE-type G spans 216 to 373; the sequence is GLNVVLVGAP…LKRTLLREAG (158 aa). Asn-226 is a K(+) binding site. Residues 226–231, 245–251, and 270–273 each bind GTP; these read NVGKSS, TDIAGTT, and DTAG. A Mg(2+)-binding site is contributed by Ser-230. 3 residues coordinate K(+): Thr-245, Ile-247, and Thr-250. Residue Thr-251 coordinates Mg(2+). Lys-448 serves as a coordination point for (6S)-5-formyl-5,6,7,8-tetrahydrofolate.

This sequence belongs to the TRAFAC class TrmE-Era-EngA-EngB-Septin-like GTPase superfamily. TrmE GTPase family. As to quaternary structure, homodimer. Heterotetramer of two MnmE and two MnmG subunits. The cofactor is K(+).

The protein resides in the cytoplasm. Its function is as follows. Exhibits a very high intrinsic GTPase hydrolysis rate. Involved in the addition of a carboxymethylaminomethyl (cmnm) group at the wobble position (U34) of certain tRNAs, forming tRNA-cmnm(5)s(2)U34. This chain is tRNA modification GTPase MnmE, found in Neisseria meningitidis serogroup A / serotype 4A (strain DSM 15465 / Z2491).